A 70-amino-acid chain; its full sequence is Small ribosomal subunit protein bS21 (70 aa).

It belongs to the bacterial ribosomal protein bS21 family.

The sequence is that of Small ribosomal subunit protein bS21 from Methylibium petroleiphilum (strain ATCC BAA-1232 / LMG 22953 / PM1).